Here is a 330-residue protein sequence, read N- to C-terminus: ATP-dependent (S)-NAD(P)H-hydrate dehydratase (330 aa).

Positions 36-327 (VIPLVRNTIP…QEINSAFKKL (292 aa)) constitute a YjeF C-terminal domain. Residues Gly136 and 189–195 (NFMEFTR) contribute to the (6S)-NADPHX site. Residues 229–233 (KGEED) and 248–257 (GSGRRCGGQG) contribute to the ATP site. Asp258 contributes to the (6S)-NADPHX binding site.

This sequence belongs to the NnrD/CARKD family. Mg(2+) is required as a cofactor.

It catalyses the reaction (6S)-NADHX + ATP = ADP + phosphate + NADH + H(+). The enzyme catalyses (6S)-NADPHX + ATP = ADP + phosphate + NADPH + H(+). Catalyzes the dehydration of the S-form of NAD(P)HX at the expense of ATP, which is converted to ADP. Together with NAD(P)HX epimerase, which catalyzes the epimerization of the S- and R-forms, the enzyme allows the repair of both epimers of NAD(P)HX, a damaged form of NAD(P)H that is a result of enzymatic or heat-dependent hydration. The sequence is that of ATP-dependent (S)-NAD(P)H-hydrate dehydratase from Danio rerio (Zebrafish).